The primary structure comprises 156 residues: ATP synthase subunit b (156 aa).

A helical membrane pass occupies residues leucine 11 to asparagine 31.

Belongs to the ATPase B chain family. F-type ATPases have 2 components, F(1) - the catalytic core - and F(0) - the membrane proton channel. F(1) has five subunits: alpha(3), beta(3), gamma(1), delta(1), epsilon(1). F(0) has three main subunits: a(1), b(2) and c(10-14). The alpha and beta chains form an alternating ring which encloses part of the gamma chain. F(1) is attached to F(0) by a central stalk formed by the gamma and epsilon chains, while a peripheral stalk is formed by the delta and b chains.

Its subcellular location is the cell inner membrane. In terms of biological role, f(1)F(0) ATP synthase produces ATP from ADP in the presence of a proton or sodium gradient. F-type ATPases consist of two structural domains, F(1) containing the extramembraneous catalytic core and F(0) containing the membrane proton channel, linked together by a central stalk and a peripheral stalk. During catalysis, ATP synthesis in the catalytic domain of F(1) is coupled via a rotary mechanism of the central stalk subunits to proton translocation. Component of the F(0) channel, it forms part of the peripheral stalk, linking F(1) to F(0). The polypeptide is ATP synthase subunit b (Haemophilus influenzae (strain 86-028NP)).